The primary structure comprises 346 residues: MNPHAKLICTVSLIMGTSITISSNHWILAWTGLEINTLAIIPLISKSHHPRAIEATIKYFLTQSTASALILFSSMTNAWSTGQWDITQLNHPTSCLMLTMAIAIKLGLVPFHFWFPEVLQGSSLITALLLSTLMKLPPITLLLLTSQSLNTTLLTLLAISSTLIGGWMGLNQTQTRKILAFSSISHLGWMIMIISYNPQLTILTFILYTIMTSTVFLSLAQIKVLKLSTLLISWTKTPMLNATVMLTLLSLAGLPPLTGFMPKWLIIQELTKQEMTPMATIITMLSLLSLFFYLRLAYHSTITLPPNSSNHMKLWRTNKTLNTPTAILTALSTTLLPLSPLIITML.

10 consecutive transmembrane segments (helical) span residues 25–45, 52–72, 95–115, 124–144, 149–169, 178–198, 200–220, 242–262, 274–294, and 326–346; these read HWIL…PLIS, AIEA…LILF, CLML…HFWF, LITA…LLLL, LNTT…GWMG, ILAF…SYNP, LTIL…LSLA, ATVM…GFMP, EMTP…FFYL, and AILT…ITML.

This sequence belongs to the complex I subunit 2 family. Core subunit of respiratory chain NADH dehydrogenase (Complex I) which is composed of 45 different subunits.

It localises to the mitochondrion inner membrane. The catalysed reaction is a ubiquinone + NADH + 5 H(+)(in) = a ubiquinol + NAD(+) + 4 H(+)(out). Functionally, core subunit of the mitochondrial membrane respiratory chain NADH dehydrogenase (Complex I) which catalyzes electron transfer from NADH through the respiratory chain, using ubiquinone as an electron acceptor. Essential for the catalytic activity and assembly of complex I. This is NADH-ubiquinone oxidoreductase chain 2 (MT-ND2) from Gallus gallus (Chicken).